The sequence spans 470 residues: Glutamate--tRNA ligase 1 (470 aa).

The 'HIGH' region signature appears at 8-18; that stretch reads PSPTGYLHVGG. The 'KMSKS' region signature appears at 250-254; sequence KLSKR. Lys253 lines the ATP pocket.

This sequence belongs to the class-I aminoacyl-tRNA synthetase family. Glutamate--tRNA ligase type 1 subfamily. Monomer.

Its subcellular location is the cytoplasm. It catalyses the reaction tRNA(Glu) + L-glutamate + ATP = L-glutamyl-tRNA(Glu) + AMP + diphosphate. Functionally, catalyzes the attachment of glutamate to tRNA(Glu) in a two-step reaction: glutamate is first activated by ATP to form Glu-AMP and then transferred to the acceptor end of tRNA(Glu). The protein is Glutamate--tRNA ligase 1 of Pseudothermotoga lettingae (strain ATCC BAA-301 / DSM 14385 / NBRC 107922 / TMO) (Thermotoga lettingae).